Here is a 76-residue protein sequence, read N- to C-terminus: Tautomerase PptA (76 aa).

The Proton acceptor; via imino nitrogen role is filled by Pro2.

Belongs to the 4-oxalocrotonate tautomerase family. PptA subfamily. Homodimer.

Its subcellular location is the cytoplasm. In Cronobacter sakazakii (strain ATCC BAA-894) (Enterobacter sakazakii), this protein is Tautomerase PptA.